A 150-amino-acid chain; its full sequence is Large ribosomal subunit protein bL9 (150 aa).

Belongs to the bacterial ribosomal protein bL9 family.

Its function is as follows. Binds to the 23S rRNA. The sequence is that of Large ribosomal subunit protein bL9 from Yersinia enterocolitica serotype O:8 / biotype 1B (strain NCTC 13174 / 8081).